The chain runs to 858 residues: Leucine--tRNA ligase (858 aa).

Residues 42-52 (PYPSGRLHMGH) carry the 'HIGH' region motif. The 'KMSKS' region signature appears at 618–622 (KMSKS). K621 contacts ATP.

It belongs to the class-I aminoacyl-tRNA synthetase family.

It is found in the cytoplasm. The enzyme catalyses tRNA(Leu) + L-leucine + ATP = L-leucyl-tRNA(Leu) + AMP + diphosphate. The protein is Leucine--tRNA ligase of Aliivibrio fischeri (strain ATCC 700601 / ES114) (Vibrio fischeri).